The following is a 141-amino-acid chain: MPVQVDDIIKLLCHVSDHQKMKATIKHSARGALVAAAGAFLGGLVGGPPGIAVGGAVGGAMGAWMTSGQFKPIPQIIMELPPVQQQRLCDDIYTIVRTLDWTDATQLIMLVMGNDSLKQKVVAALINYMTKELQAEIQYGD.

Residues 33 to 53 (LVAAAGAFLGGLVGGPPGIAV) form a helical membrane-spanning segment.

It belongs to the C19orf12 family.

It localises to the mitochondrion. Its subcellular location is the mitochondrion membrane. It is found in the endoplasmic reticulum. The protein localises to the cytoplasm. The protein resides in the cytosol. The chain is Protein C19orf12 homolog from Xenopus tropicalis (Western clawed frog).